The primary structure comprises 1781 residues: Signal-induced proliferation-associated 1-like protein 3 (1781 aa).

Disordered regions lie at residues 45–166 (SMSQ…FLPL) and 239–332 (TELL…EASR). Residues 54 to 73 (PATATATATATTRPSPTTPA) are compositionally biased toward low complexity. Over residues 87–97 (PPKREALREHS) the composition is skewed to basic and acidic residues. Phosphoserine is present on S100. Residues 118–135 (RSIQNGQPPTSTPASSGS) show a composition bias toward polar residues. The segment covering 137–146 (AFHRLSRRRS) has biased composition (basic residues). At S146 the chain carries Phosphoserine. The residue at position 401 (S401) is a Phosphoserine. One can recognise a Rap-GAP domain in the interval 611-828 (LLKLDEQGLC…RTRQEYLKDL (218 aa)). The 77-residue stretch at 966-1042 (DMTLRRNGLG…VKVVIIPPFE (77 aa)) folds into the PDZ domain. 4 disordered regions span residues 1046 to 1112 (PRRG…SLSR), 1124 to 1221 (ESQP…QKPE), 1236 to 1565 (AGSS…GLEP), and 1583 to 1636 (TLPA…RLDP). Polar residues-rich tracts occupy residues 1080–1111 (APWQWSGPASHNSLPASKWATPTTPGHAQSLS) and 1157–1166 (PSGSFSTPGS). Over residues 1196–1210 (DGTSSGDSSSGGLTS) the composition is skewed to low complexity. The span at 1245-1261 (SRQDAAGKDSPNRHSKG) shows a compositional bias: basic and acidic residues. Positions 1266 to 1281 (SSHSSSNTLSSNASSS) are enriched in low complexity. Residues 1304–1322 (GGSSDSGIDTTLYTSSPSC) show a composition bias toward polar residues. Phosphoserine is present on S1364. The residue at position 1387 (T1387) is a Phosphothreonine. The span at 1425-1441 (RPSQLAQPSPFQLSASV) shows a compositional bias: polar residues. N6-acetyllysine is present on K1448. Over residues 1509-1518 (TIEDDLKKLI) the composition is skewed to basic and acidic residues. The segment covering 1532–1547 (GQSPQKGLQRTLSDES) has biased composition (polar residues). Phosphoserine is present on residues S1544 and S1547. The span at 1599–1609 (PGATPAAGSGF) shows a compositional bias: low complexity. A phosphoserine mark is found at S1619 and S1622. Basic and acidic residues predominate over residues 1625–1635 (DGRDRPLRRLD). S1677 carries the post-translational modification Phosphoserine. Positions 1685-1712 (SPVHSHLSLERGPPTPRTTPTMSEEPPL) are disordered. T1699 and T1703 each carry phosphothreonine. Residues 1720 to 1774 (QLEVMLKQLHTDLQKEKQDKVVLQSEVASLRQNNQRLQEESQAASEQLRKFAEIF) adopt a coiled-coil conformation.

The protein resides in the apical cell membrane. Plays a critical role in epithelial cell morphogenesis, polarity, adhesion and cytoskeletal organization in the lens. This chain is Signal-induced proliferation-associated 1-like protein 3 (SIPA1L3), found in Homo sapiens (Human).